We begin with the raw amino-acid sequence, 504 residues long: Crh-like protein CRH12 (504 aa).

An N-terminal signal peptide occupies residues 1–18 (MYKQILTFLILFLRYILS). The GH16 domain occupies 19–270 (EFPDDPYEDD…YSKALTYSYG (252 aa)). Asn-34 is a glycosylation site (N-linked (GlcNAc...) asparagine). Cysteines 43 and 51 form a disulfide. Glu-138 functions as the Nucleophile in the catalytic mechanism. Glu-143 serves as the catalytic Proton donor. Glu-143 is a chitin binding site. N-linked (GlcNAc...) asparagine glycosylation is present at Asn-161. Residues Lys-221, Trp-225, and Thr-234 each coordinate chitin. The segment at 304-404 (KPTPKQETDD…LDISTQLPPL (101 aa)) is disordered. Residues 316-329 (VLTSSKSQRVATTI) are compositionally biased toward polar residues. Residues 356 to 378 (WETEQDETGTDDTENSDNEEEES) show a composition bias toward acidic residues. N-linked (GlcNAc...) asparagine glycosylation is found at Asn-407, Asn-416, and Asn-425. Gly-479 carries GPI-anchor amidated glycine lipidation. Residues 480-504 (VSSILATSFSSVVIAEILVIVVLLL) constitute a propeptide, removed in mature form.

The protein belongs to the glycosyl hydrolase 16 family. CRH1 subfamily. In terms of processing, the GPI-anchor is attached to the protein in the endoplasmic reticulum and serves to target the protein to the cell surface. There, the glucosamine-inositol phospholipid moiety is cleaved off and the GPI-modified mannoprotein is covalently attached via its lipidless GPI glycan remnant to the 1,6-beta-glucan of the outer cell wall layer.

It is found in the secreted. The protein localises to the cell wall. It localises to the membrane. The enzyme catalyses Random endo-hydrolysis of N-acetyl-beta-D-glucosaminide (1-&gt;4)-beta-linkages in chitin and chitodextrins.. Its function is as follows. Dual chitinase/transglycosylase that plays a role in cell wall architecture. Chitinase and transglycosylase activities are coupled. Required for the polysaccharide cross-linking at the septa and the cell wall. More specifically, transfers chitin to 1,6-beta-glucan in the cell wall. Plays an important role in fungal pathogenesis via its functions in cell wall assembly and regeneration, filamentation, and adherence to host cells. This Candida albicans (strain SC5314 / ATCC MYA-2876) (Yeast) protein is Crh-like protein CRH12 (CRH12).